The following is a 202-amino-acid chain: Dephospho-CoA kinase (202 aa).

A DPCK domain is found at 3 to 200 (TIGLTGGIGS…QRYLTLAANR (198 aa)). Residue 11–16 (GSGKSA) participates in ATP binding.

The protein belongs to the CoaE family.

It is found in the cytoplasm. The enzyme catalyses 3'-dephospho-CoA + ATP = ADP + CoA + H(+). The protein operates within cofactor biosynthesis; coenzyme A biosynthesis; CoA from (R)-pantothenate: step 5/5. Its function is as follows. Catalyzes the phosphorylation of the 3'-hydroxyl group of dephosphocoenzyme A to form coenzyme A. The protein is Dephospho-CoA kinase of Thiobacillus denitrificans (strain ATCC 25259 / T1).